Here is a 216-residue protein sequence, read N- to C-terminus: Transmembrane protein 163a (216 aa).

The Cytoplasmic portion of the chain corresponds to 1-15 (MRLKPHEAQSYRKKA). Residues 16 to 36 (LWVSWISIVVTLILAVAGFTV) traverse the membrane as a helical segment. Residues 37–43 (SFMRHSA) are Extracellular-facing. A helical transmembrane segment spans residues 44–64 (SAFGFAFDATLDVLSSIIVLW). The Cytoplasmic segment spans residues 65 to 77 (RYSNAAAVHSAHR). The helical transmembrane segment at 78–98 (EYIACVILGVIFILSSLCILG) threads the bilayer. The Extracellular segment spans residues 99–114 (KAIHDLATKLLPEVDD). A helical transmembrane segment spans residues 115 to 135 (FLFSVSIVSGLMCVILAVAKF). At 136–144 (MLGRILTSR) the chain is on the cytoplasmic side. A helical membrane pass occupies residues 145–165 (ALITDGFNSMVGGIMGFSILI). Over 166–182 (SAEVFRHYPNVWYLDGT) the chain is Extracellular. Residues 183–203 (IGILIGLVIQAYGVKLLVDMI) form a helical membrane-spanning segment. Residues 204 to 216 (PRVRQTRNYERFE) are Cytoplasmic-facing.

Belongs to the TMEM163 family.

Its subcellular location is the cytoplasmic vesicle. It localises to the secretory vesicle. It is found in the synaptic vesicle membrane. The protein localises to the early endosome membrane. The protein resides in the late endosome membrane. Its subcellular location is the lysosome membrane. It localises to the cell membrane. The enzyme catalyses Zn(2+)(in) = Zn(2+)(out). Its function is as follows. Zinc ion transporter that mediates zinc efflux and plays a crucial role in intracellular zinc homeostasis. Binds the divalent cations Zn(2+), Ni(2+), and to a minor extent Cu(2+). Is a functional modulator of P2X purinoceptors, including P2RX1, P2RX3, P2RX4 and P2RX7. Plays a role in central nervous system development and is required for myelination, and survival and proliferation of oligodendrocytes. The protein is Transmembrane protein 163a of Danio rerio (Zebrafish).